Reading from the N-terminus, the 276-residue chain is Bis(5'-nucleosyl)-tetraphosphatase, symmetrical (276 aa).

The protein belongs to the Ap4A hydrolase family.

It catalyses the reaction P(1),P(4)-bis(5'-adenosyl) tetraphosphate + H2O = 2 ADP + 2 H(+). Functionally, hydrolyzes diadenosine 5',5'''-P1,P4-tetraphosphate to yield ADP. The polypeptide is Bis(5'-nucleosyl)-tetraphosphatase, symmetrical (Dechloromonas aromatica (strain RCB)).